A 65-amino-acid chain; its full sequence is uncharacterized protein (65 aa).

This is an uncharacterized protein from Archaeoglobus fulgidus (strain ATCC 49558 / DSM 4304 / JCM 9628 / NBRC 100126 / VC-16).